Consider the following 310-residue polypeptide: Carbamate kinase (310 aa).

This sequence belongs to the carbamate kinase family.

It is found in the cytoplasm. It carries out the reaction hydrogencarbonate + NH4(+) + ATP = carbamoyl phosphate + ADP + H2O + H(+). It functions in the pathway metabolic intermediate metabolism; carbamoyl phosphate degradation; CO(2) and NH(3) from carbamoyl phosphate: step 1/1. The sequence is that of Carbamate kinase (arcC) from Staphylococcus epidermidis (strain ATCC 35984 / DSM 28319 / BCRC 17069 / CCUG 31568 / BM 3577 / RP62A).